The primary structure comprises 176 residues: Translation initiation factor IF-3 (176 aa).

This sequence belongs to the IF-3 family. In terms of assembly, monomer.

The protein resides in the cytoplasm. IF-3 binds to the 30S ribosomal subunit and shifts the equilibrium between 70S ribosomes and their 50S and 30S subunits in favor of the free subunits, thus enhancing the availability of 30S subunits on which protein synthesis initiation begins. This Nitratidesulfovibrio vulgaris (strain ATCC 29579 / DSM 644 / CCUG 34227 / NCIMB 8303 / VKM B-1760 / Hildenborough) (Desulfovibrio vulgaris) protein is Translation initiation factor IF-3.